Reading from the N-terminus, the 487-residue chain is Betaine aldehyde dehydrogenase (487 aa).

K(+) contacts are provided by Ser26 and Asp93. 150 to 152 (GAW) serves as a coordination point for NAD(+). The active-site Charge relay system is the Lys162. NAD(+) is bound by residues 176-179 (KPSE) and 229-232 (SVPT). Leu244 contacts K(+). The active-site Proton acceptor is the Glu250. Positions 252, 284, and 384 each coordinate NAD(+). Cys284 acts as the Nucleophile in catalysis. Cysteine sulfenic acid (-SOH) is present on Cys284. Lys454 and Gly457 together coordinate K(+). Glu461 functions as the Charge relay system in the catalytic mechanism.

The protein belongs to the aldehyde dehydrogenase family. Dimer of dimers. It depends on K(+) as a cofactor.

It carries out the reaction betaine aldehyde + NAD(+) + H2O = glycine betaine + NADH + 2 H(+). The protein operates within amine and polyamine biosynthesis; betaine biosynthesis via choline pathway; betaine from betaine aldehyde: step 1/1. In terms of biological role, involved in the biosynthesis of the osmoprotectant glycine betaine. Catalyzes the irreversible oxidation of betaine aldehyde to the corresponding acid. The chain is Betaine aldehyde dehydrogenase from Rhizobium etli (strain CIAT 652).